The following is a 466-amino-acid chain: Coagulation factor VII (466 aa).

The signal sequence occupies residues 1 to 20 (MVSQALRLLCLLLGLQGCLA). The propeptide occupies 21-60 (AGGVAEASGGETRDXXWKPGPHRVFITQEEAHGVLHRRRR). In terms of domain architecture, Gla spans 61 to 105 (ANAFLEELRPGSLERECKEEQCSFEEAREIFKDLERTKLFWISYS). Residues E66, E67, E74, E76, E79, E80, E85, E86, E89, and E95 each carry the 4-carboxyglutamate modification. A disulfide bridge connects residues C77 and C82. The 37-residue stretch at 106-142 (DGDQCASSPCQNGGSCKDQLQSYICFCLPAFEGRNCE) folds into the EGF-like 1; calcium-binding domain. Disulfide bonds link C110–C121, C115–C130, C132–C141, C151–C162, C158–C172, C174–C187, C195–C322, C219–C224, C238–C254, and C370–C389. Residue S112 is glycosylated (O-linked (Glc...) serine; alternate). O-linked (Xyl...) serine; alternate glycosylation occurs at S112. A glycan (O-linked (Fuc) serine) is linked at S120. D123 bears the (3R)-3-hydroxyaspartate mark. Residues 147–188 (DQLICVNENGGCEQYCSDHTGTKRSCRCHEGYSLLADGVSCT) form the EGF-like 2 domain. Residue N205 is glycosylated (N-linked (GlcNAc...) asparagine). A Peptidase S1 domain is found at 213 to 452 (IVGGKVCPKG…YIEWLQKLMR (240 aa)). Residues H253 and D302 each act as charge relay system in the active site. N-linked (GlcNAc...) asparagine glycosylation occurs at N382. Substrate is bound at residue D398. C400 and C428 are disulfide-bonded. S404 serves as the catalytic Charge relay system.

The protein belongs to the peptidase S1 family. In terms of assembly, heterodimer of a light chain and a heavy chain linked by a disulfide bond. In terms of processing, the vitamin K-dependent, enzymatic carboxylation of some glutamate residues allows the modified protein to bind calcium. The iron and 2-oxoglutarate dependent 3-hydroxylation of aspartate and asparagine is (R) stereospecific within EGF domains. Post-translationally, O-glycosylated. O-fucosylated by POFUT1 on a conserved serine or threonine residue found in the consensus sequence C2-X(4,5)-[S/T]-C3 of EGF domains, where C2 and C3 are the second and third conserved cysteines. In terms of processing, can be either O-glucosylated or O-xylosylated at Ser-112 by POGLUT1.

It localises to the secreted. It carries out the reaction Selective cleavage of Arg-|-Ile bond in factor X to form factor Xa.. Functionally, initiates the extrinsic pathway of blood coagulation. Serine protease that circulates in the blood in a zymogen form. Factor VII is converted to factor VIIa by factor Xa, factor XIIa, factor IXa, or thrombin by minor proteolysis. In the presence of tissue factor and calcium ions, factor VIIa then converts factor X to factor Xa by limited proteolysis. Factor VIIa also converts factor IX to factor IXa in the presence of tissue factor and calcium. In Pan troglodytes (Chimpanzee), this protein is Coagulation factor VII (F7).